A 428-amino-acid chain; its full sequence is Serine--tRNA ligase (428 aa).

231–233 (TAE) provides a ligand contact to L-serine. ATP is bound at residue 262-264 (RSE). L-serine is bound at residue glutamate 285. Residue 349–352 (EISS) participates in ATP binding. Residue serine 385 coordinates L-serine.

It belongs to the class-II aminoacyl-tRNA synthetase family. Type-1 seryl-tRNA synthetase subfamily. As to quaternary structure, homodimer. The tRNA molecule binds across the dimer.

The protein localises to the cytoplasm. It carries out the reaction tRNA(Ser) + L-serine + ATP = L-seryl-tRNA(Ser) + AMP + diphosphate + H(+). It catalyses the reaction tRNA(Sec) + L-serine + ATP = L-seryl-tRNA(Sec) + AMP + diphosphate + H(+). The protein operates within aminoacyl-tRNA biosynthesis; selenocysteinyl-tRNA(Sec) biosynthesis; L-seryl-tRNA(Sec) from L-serine and tRNA(Sec): step 1/1. Its function is as follows. Catalyzes the attachment of serine to tRNA(Ser). Is also able to aminoacylate tRNA(Sec) with serine, to form the misacylated tRNA L-seryl-tRNA(Sec), which will be further converted into selenocysteinyl-tRNA(Sec). The polypeptide is Serine--tRNA ligase (Staphylococcus aureus (strain MSSA476)).